The sequence spans 149 residues: Lipoprotein signal peptidase (149 aa).

3 helical membrane-spanning segments follow: residues 24–44 (SHIA…LTNL), 57–77 (KMWF…YLLW), and 81–101 (GKWL…GNFI). Residues D111 and D127 contribute to the active site. The helical transmembrane segment at 122–142 (IFNFADSCLTVGVIFILIGVL) threads the bilayer.

This sequence belongs to the peptidase A8 family.

It localises to the cell membrane. It carries out the reaction Release of signal peptides from bacterial membrane prolipoproteins. Hydrolyzes -Xaa-Yaa-Zaa-|-(S,diacylglyceryl)Cys-, in which Xaa is hydrophobic (preferably Leu), and Yaa (Ala or Ser) and Zaa (Gly or Ala) have small, neutral side chains.. It functions in the pathway protein modification; lipoprotein biosynthesis (signal peptide cleavage). Its function is as follows. This protein specifically catalyzes the removal of signal peptides from prolipoproteins. This is Lipoprotein signal peptidase from Lactiplantibacillus plantarum (strain ATCC BAA-793 / NCIMB 8826 / WCFS1) (Lactobacillus plantarum).